The following is a 375-amino-acid chain: 23S rRNA (uracil(747)-C(5))-methyltransferase RlmC (375 aa).

Residues cysteine 3, cysteine 11, cysteine 14, and cysteine 87 each coordinate [4Fe-4S] cluster. The S-adenosyl-L-methionine site is built by glutamine 212, phenylalanine 241, glutamate 262, and asparagine 307. Cysteine 334 (nucleophile) is an active-site residue.

This sequence belongs to the class I-like SAM-binding methyltransferase superfamily. RNA M5U methyltransferase family. RlmC subfamily.

The enzyme catalyses uridine(747) in 23S rRNA + S-adenosyl-L-methionine = 5-methyluridine(747) in 23S rRNA + S-adenosyl-L-homocysteine + H(+). Catalyzes the formation of 5-methyl-uridine at position 747 (m5U747) in 23S rRNA. The protein is 23S rRNA (uracil(747)-C(5))-methyltransferase RlmC of Pectobacterium atrosepticum (strain SCRI 1043 / ATCC BAA-672) (Erwinia carotovora subsp. atroseptica).